The chain runs to 244 residues: Carbonic anhydrase (244 aa).

An N-terminal signal peptide occupies residues 1-19 (MKGKFSIALMLSACFSASA). An Alpha-carbonic anhydrase domain is found at 23-244 (VHWGYEGSGD…QPLNGRIIIH (222 aa)). A disulfide bond links cysteine 46 and cysteine 199. Histidine 84 (proton acceptor) is an active-site residue. Zn(2+) contacts are provided by histidine 109, histidine 111, and histidine 128. 195 to 196 (TT) contributes to the substrate binding site.

Belongs to the alpha-carbonic anhydrase family. It depends on Zn(2+) as a cofactor.

The protein resides in the periplasm. The enzyme catalyses hydrogencarbonate + H(+) = CO2 + H2O. Functionally, reversible hydration of carbon dioxide. The sequence is that of Carbonic anhydrase (cah) from Pectobacterium atrosepticum (strain SCRI 1043 / ATCC BAA-672) (Erwinia carotovora subsp. atroseptica).